The primary structure comprises 96 residues: MTPCLESFCQRAKDCKQNIPLPFLIQDWPLSESKPQGQDFWTPQPLQAAAPSHEFQQVALHPARTRLASRPQGGRLMSSREVGLRAPRCSCGKRKR.

This is an uncharacterized protein from Homo sapiens (Human).